A 407-amino-acid polypeptide reads, in one-letter code: Zinc finger protein 552 (407 aa).

The region spanning 14–90 (VTFEDVAVKF…PMAGVSPKKA (77 aa)) is the KRAB domain. The C2H2-type 1 zinc-finger motif lies at 91–113 (HPCEMCGPILGDILHVADHQGTH). Residues 119–141 (HRCEAWGNKLYDSGNFHQHQNEH) form a C2H2-type 2; degenerate zinc finger. Glycyl lysine isopeptide (Lys-Gly) (interchain with G-Cter in SUMO2) cross-links involve residues Lys176 and Lys198. Residues 212-234 (YSCGGCMKHFSTKDILSQHERLL) form a C2H2-type 3; degenerate zinc finger. Residues 244-262 (ECGKSSSKYDSFSNHQGVH) form a C2H2-type 4; degenerate zinc finger. Residues Lys251 and Lys266 each participate in a glycyl lysine isopeptide (Lys-Gly) (interchain with G-Cter in SUMO2) cross-link. 5 consecutive C2H2-type zinc fingers follow at residues 268 to 290 (YTCGICGKLFNSKSHLLVHQRIH), 296 to 318 (YECEVCQKFFRHKYHLIAHQRVH), 324 to 346 (YECSDCGKSFTHSSTFRVHKRVH), 352 to 374 (YECSECGKSFAESSSLTKHRRVH), and 380 to 402 (YGCSECEKKFRQISSLRHHQRVH). A Glycyl lysine isopeptide (Lys-Gly) (interchain with G-Cter in SUMO2) cross-link involves residue Lys308.

This sequence belongs to the krueppel C2H2-type zinc-finger protein family.

The protein localises to the nucleus. Its function is as follows. May be involved in transcriptional regulation. This is Zinc finger protein 552 (ZNF552) from Homo sapiens (Human).